Consider the following 158-residue polypeptide: uncharacterized protein (158 aa).

Residues 1–22 (MKKIPNKLLAVSAFLTITTTYA) form the signal peptide. A helical membrane pass occupies residues 120–140 (LTGIIEYDTKFENHYETLVEA).

Its subcellular location is the cell membrane. This is an uncharacterized protein from Bacillus cereus.